Reading from the N-terminus, the 91-residue chain is Large ribosomal subunit protein uL23 (91 aa).

This sequence belongs to the universal ribosomal protein uL23 family. In terms of assembly, part of the 50S ribosomal subunit. Contacts protein L29.

Functionally, binds to 23S rRNA. One of the proteins that surrounds the polypeptide exit tunnel on the outside of the ribosome. The sequence is that of Large ribosomal subunit protein uL23 from Staphylothermus marinus (strain ATCC 43588 / DSM 3639 / JCM 9404 / F1).